We begin with the raw amino-acid sequence, 669 residues long: MSIEKTLDELKKQLNYHAYRYYVEDSPELPDAEYDRMMQQLLLIEKEHPEFMTVDSPSQRVGGEALGGFTQVQHEIPMLSLDNAFNDNELDSFEKRINDRLISDSVSLFCCEPKLDGLAVSLLYVDGLLVQAGTRGDGATGENITENVRTIRCIPLTLQGEGWPTRLEVRGEVFMPKAGFDALNERALKRAEKPFANPRNAAAGSLRQLDSKITATRPLSFYAYSVGIIEGGELEGSHYQRFVQLKNWGLPMCEETKQCHSLTDVKAYYKDILERRDALKYEIDGVVIKVDSISLQEQLGFVARAPRWAIAYKFPAQEELTVLNDVEFQVGRTGAITPVAKLEPIFVGGVTVSNATLHNADEIARLGVHIGDTVIIRRAGDVIPQIVSVVEARRPEDSKAIIYPTTCPACDSQLERIEGEVVTRCVAGLVCPAQRKEALKHFVSRKALDVDGLGDKVVEQLVDKEMVETPADLFKLSAGVLTVLDRMGPKSAQNVVNALNKAKETTLSRFLYSLGIREVGEATAANLALHFQTLNAISSATFEQLIEVSDVGDIVAKHILGFFSEPHNQAVIENLQLMGVNWPDIKALDESVPQPLADKVVVLTGTLYKLKRNEAKAALQELGAKVAGSVSKNTDILFAGEAAGSKLAKAEELGVEIMNEEQLIEILNN.

NAD(+)-binding positions include 31–35 (DAEYD), 80–81 (SL), and E112. The active-site N6-AMP-lysine intermediate is the K114. R135, E172, K289, and K313 together coordinate NAD(+). 4 residues coordinate Zn(2+): C407, C410, C425, and C431. In terms of domain architecture, BRCT spans 591–669 (SVPQPLADKV…EEQLIEILNN (79 aa)).

Belongs to the NAD-dependent DNA ligase family. LigA subfamily. Requires Mg(2+) as cofactor. It depends on Mn(2+) as a cofactor.

The enzyme catalyses NAD(+) + (deoxyribonucleotide)n-3'-hydroxyl + 5'-phospho-(deoxyribonucleotide)m = (deoxyribonucleotide)n+m + AMP + beta-nicotinamide D-nucleotide.. Functionally, DNA ligase that catalyzes the formation of phosphodiester linkages between 5'-phosphoryl and 3'-hydroxyl groups in double-stranded DNA using NAD as a coenzyme and as the energy source for the reaction. It is essential for DNA replication and repair of damaged DNA. This is DNA ligase from Aliivibrio salmonicida (strain LFI1238) (Vibrio salmonicida (strain LFI1238)).